We begin with the raw amino-acid sequence, 243 residues long: UTP--glucose-1-phosphate uridylyltransferase AglF (243 aa).

This sequence belongs to the UDPGP type 2 family.

The enzyme catalyses alpha-D-glucose 1-phosphate + UTP + H(+) = UDP-alpha-D-glucose + diphosphate. It participates in cell surface structure biogenesis; S-layer biogenesis. Involved in the assembly of a N-linked pentasaccharide that decorates the S-layer glycoprotein and flagellins. Involved in the biosynthesis of the hexuronic acid found at position 3 of the pentasaccharide. This Haloferax volcanii (strain ATCC 29605 / DSM 3757 / JCM 8879 / NBRC 14742 / NCIMB 2012 / VKM B-1768 / DS2) (Halobacterium volcanii) protein is UTP--glucose-1-phosphate uridylyltransferase AglF (aglF).